The following is a 429-amino-acid chain: Glutamate-1-semialdehyde 2,1-aminomutase 2 (429 aa).

Lysine 268 carries the N6-(pyridoxal phosphate)lysine modification.

It belongs to the class-III pyridoxal-phosphate-dependent aminotransferase family. HemL subfamily. Homodimer. Pyridoxal 5'-phosphate serves as cofactor.

The protein resides in the cytoplasm. It carries out the reaction (S)-4-amino-5-oxopentanoate = 5-aminolevulinate. Its pathway is porphyrin-containing compound metabolism; protoporphyrin-IX biosynthesis; 5-aminolevulinate from L-glutamyl-tRNA(Glu): step 2/2. The chain is Glutamate-1-semialdehyde 2,1-aminomutase 2 from Staphylococcus aureus (strain MRSA252).